A 259-amino-acid chain; its full sequence is Ubiquitin-conjugating enzyme E2 J2 (259 aa).

The Cytoplasmic portion of the chain corresponds to 1 to 226 (MSSNSVKRAP…AGLQQANRHH (226 aa)). Residues 12-162 (TATQRLKQDY…DKVFCELFPE (151 aa)) enclose the UBC core domain. Cysteine 94 functions as the Glycyl thioester intermediate in the catalytic mechanism. Residues 174–200 (QDELSSRPQALPLPDVVPDGETHHGQH) are disordered. The chain crosses the membrane as a helical; Anchor for type IV membrane protein span at residues 227-247 (GLLGGALANLFVIVGFAAFAY). Topologically, residues 248–259 (TVKYVLRSIAQE) are lumenal.

It belongs to the ubiquitin-conjugating enzyme family.

It is found in the endoplasmic reticulum membrane. The enzyme catalyses S-ubiquitinyl-[E1 ubiquitin-activating enzyme]-L-cysteine + [E2 ubiquitin-conjugating enzyme]-L-cysteine = [E1 ubiquitin-activating enzyme]-L-cysteine + S-ubiquitinyl-[E2 ubiquitin-conjugating enzyme]-L-cysteine.. Its pathway is protein modification; protein ubiquitination. Its function is as follows. Catalyzes the covalent attachment of ubiquitin to other proteins. Seems to function in the selective degradation of misfolded membrane proteins from the endoplasmic reticulum (ERAD). In cooperation with the GATOR2 complex, catalyzes 'Lys-6'-linked ubiquitination of NPRL2. The polypeptide is Ubiquitin-conjugating enzyme E2 J2 (UBE2J2) (Bos taurus (Bovine)).